We begin with the raw amino-acid sequence, 183 residues long: Putative lipoprotein LpqE (183 aa).

The signal sequence occupies residues 1–30; sequence MSRFKISLPALATRVAVLGFLTLMASVLGG. C31 carries N-palmitoyl cysteine lipidation. The S-diacylglycerol cysteine moiety is linked to residue C31.

The protein resides in the cell membrane. This chain is Putative lipoprotein LpqE (lpqE), found in Mycobacterium leprae (strain TN).